The following is a 224-amino-acid chain: UPF0758 protein Avin_02940 (224 aa).

The region spanning Ala-102–Leu-224 is the MPN domain. Residues His-173, His-175, and Asp-186 each contribute to the Zn(2+) site. The short motif at His-173–Asp-186 is the JAMM motif element.

Belongs to the UPF0758 family.

This Azotobacter vinelandii (strain DJ / ATCC BAA-1303) protein is UPF0758 protein Avin_02940.